A 771-amino-acid polypeptide reads, in one-letter code: DNA helicase/primase complex-associated protein (771 aa).

Belongs to the herpesviridae HEPA family. Associates with the primase and the helicase to form the helicase-primase complex. Interacts with the origin-binding protein. Interacts with the polymerase catalytic subunit.

Its subcellular location is the host nucleus. In terms of biological role, component of the helicase/primase complex. Unwinds the DNA at the replication forks and generates single-stranded DNA for both leading and lagging strand synthesis. The primase synthesizes short RNA primers on the lagging strand that the polymerase presumably elongates using dNTPs. The primase-associated factor has no known catalytic activity in the complex and may serve to facilitate the formation of the replisome by directly interacting with the origin-binding protein and the polymerase. The protein is DNA helicase/primase complex-associated protein of Varicella-zoster virus (strain Oka vaccine) (HHV-3).